The sequence spans 77 residues: ATP synthase subunit c (77 aa).

A run of 2 helical transmembrane segments spans residues 13-33 and 55-75; these read IATV…GIVA and FLGI…YFIF.

The protein belongs to the ATPase C chain family. F-type ATPases have 2 components, F(1) - the catalytic core - and F(0) - the membrane proton channel. F(1) has five subunits: alpha(3), beta(3), gamma(1), delta(1), epsilon(1). F(0) has three main subunits: a(1), b(2) and c(10-14). The alpha and beta chains form an alternating ring which encloses part of the gamma chain. F(1) is attached to F(0) by a central stalk formed by the gamma and epsilon chains, while a peripheral stalk is formed by the delta and b chains.

The protein localises to the cell membrane. In terms of biological role, f(1)F(0) ATP synthase produces ATP from ADP in the presence of a proton or sodium gradient. F-type ATPases consist of two structural domains, F(1) containing the extramembraneous catalytic core and F(0) containing the membrane proton channel, linked together by a central stalk and a peripheral stalk. During catalysis, ATP synthesis in the catalytic domain of F(1) is coupled via a rotary mechanism of the central stalk subunits to proton translocation. Key component of the F(0) channel; it plays a direct role in translocation across the membrane. A homomeric c-ring of between 10-14 subunits forms the central stalk rotor element with the F(1) delta and epsilon subunits. The polypeptide is ATP synthase subunit c (Clavibacter sepedonicus (Clavibacter michiganensis subsp. sepedonicus)).